The sequence spans 339 residues: Ketol-acid reductoisomerase (NADP(+)) (339 aa).

A KARI N-terminal Rossmann domain is found at 1 to 182; sequence MRVYYDRDAD…GGGRSGVIET (182 aa). NADP(+)-binding positions include 24-27, arginine 48, serine 51, threonine 53, and 83-86; these read YGSQ and DELQ. Histidine 108 is a catalytic residue. Residue glycine 134 participates in NADP(+) binding. In terms of domain architecture, KARI C-terminal knotted spans 183–328; sequence TFKEECETDL…EKLRGMMPWI (146 aa). The Mg(2+) site is built by aspartate 191, glutamate 195, glutamate 227, and glutamate 231. Serine 252 provides a ligand contact to substrate.

This sequence belongs to the ketol-acid reductoisomerase family. It depends on Mg(2+) as a cofactor.

It catalyses the reaction (2R)-2,3-dihydroxy-3-methylbutanoate + NADP(+) = (2S)-2-acetolactate + NADPH + H(+). It carries out the reaction (2R,3R)-2,3-dihydroxy-3-methylpentanoate + NADP(+) = (S)-2-ethyl-2-hydroxy-3-oxobutanoate + NADPH + H(+). It functions in the pathway amino-acid biosynthesis; L-isoleucine biosynthesis; L-isoleucine from 2-oxobutanoate: step 2/4. Its pathway is amino-acid biosynthesis; L-valine biosynthesis; L-valine from pyruvate: step 2/4. In terms of biological role, involved in the biosynthesis of branched-chain amino acids (BCAA). Catalyzes an alkyl-migration followed by a ketol-acid reduction of (S)-2-acetolactate (S2AL) to yield (R)-2,3-dihydroxy-isovalerate. In the isomerase reaction, S2AL is rearranged via a Mg-dependent methyl migration to produce 3-hydroxy-3-methyl-2-ketobutyrate (HMKB). In the reductase reaction, this 2-ketoacid undergoes a metal-dependent reduction by NADPH to yield (R)-2,3-dihydroxy-isovalerate. In Brucella anthropi (strain ATCC 49188 / DSM 6882 / CCUG 24695 / JCM 21032 / LMG 3331 / NBRC 15819 / NCTC 12168 / Alc 37) (Ochrobactrum anthropi), this protein is Ketol-acid reductoisomerase (NADP(+)).